We begin with the raw amino-acid sequence, 508 residues long: ATP synthase subunit alpha (508 aa).

170–177 (GDRQTGKT) is a binding site for ATP.

Belongs to the ATPase alpha/beta chains family. In terms of assembly, F-type ATPases have 2 components, CF(1) - the catalytic core - and CF(0) - the membrane proton channel. CF(1) has five subunits: alpha(3), beta(3), gamma(1), delta(1), epsilon(1). CF(0) has three main subunits: a(1), b(2) and c(9-12). The alpha and beta chains form an alternating ring which encloses part of the gamma chain. CF(1) is attached to CF(0) by a central stalk formed by the gamma and epsilon chains, while a peripheral stalk is formed by the delta and b chains.

Its subcellular location is the cell inner membrane. The enzyme catalyses ATP + H2O + 4 H(+)(in) = ADP + phosphate + 5 H(+)(out). Functionally, produces ATP from ADP in the presence of a proton gradient across the membrane. The alpha chain is a regulatory subunit. The protein is ATP synthase subunit alpha of Dictyoglomus turgidum (strain DSM 6724 / Z-1310).